Reading from the N-terminus, the 204-residue chain is MNAIIIDDHPLAIAAIRNLLIKNDIEILAELTEGGSAVQRVETLKPDIVIIDVDIPGVNGIQVLETLRKRQYSGIIIIVSAKNDHFYGKHCADAGANGFVSKKEGMNNIIAAIEAAKNGYCYFPFSLNRFVGSLTSDQQKLDSLSKQEISVMRYILDGKDNNDIAEKMFISNKTVSTYKSRLMEKLECKSLMDLYTFAQRNKIG.

Residues 2-117 form the Response regulatory domain; that stretch reads NAIIIDDHPL…NIIAAIEAAK (116 aa). Asp52 bears the 4-aspartylphosphate mark. One can recognise an HTH luxR-type domain in the interval 137 to 202; it reads DQQKLDSLSK…DLYTFAQRNK (66 aa). Positions 161–180 form a DNA-binding region, H-T-H motif; the sequence is NNDIAEKMFISNKTVSTYKS.

As to quaternary structure, homodimer. Post-translationally, phosphorylated by EvgS.

The protein localises to the cytoplasm. Its function is as follows. Member of the two-component regulatory system EvgS/EvgA. Regulates the expression of emrKY operon and yfdX. Also seems to control expression of at least one other multidrug efflux operon. This is DNA-binding transcriptional activator EvgA (evgA) from Escherichia coli O157:H7.